The following is a 538-amino-acid chain: MALPYHIFLFTVLLPSFTLTAPPPCRCMTSSSPYQEFLWRMQRPGNIDAPSYRSFSKGTPTFTAHTHMPRNCYHSATLCMHANTHYWTGKIINPSCPGGLGVTVCWTYFTHTGMSDGGGVQDQAREKHVKEVISQLTRVHSASRPYKGLDLSKLHETLRTHTRLVSLFNTTLTGLHEVSAQNPTNCWICLPLNFRPYVSIPVPEQWNNFSTEINTTSVLVGPLVSNLEITHTSNLTCVKFSNTTDTTNSQCIRWVTPPTQIVCLPSGIFFVCGTSAYRCLNGSSESMCFLSFLVPPMTIYTEQDLYNYVVSKPRNKRVPILPFVIGAGVLGALGTGIGGITTSTQFYYKLSQELNGDMERVADSLVTLQDQLNSLAAVVLQNRRALDLLTAERGGTCLFLGEECCYYVNQSGIVTEKVKEIRDRIQRRAEELRNTGPWGLLSQWMPWILPFLGPLAAIILLLLFGPCIFNLLVNFVSSRIEAVKLQMEPKMQSKTKIYRRPLDRPASPRSDVNDIKGTPPEEILTAQPLLRPNSAGSS.

The first 20 residues, 1-20, serve as a signal peptide directing secretion; that stretch reads MALPYHIFLFTVLLPSFTLT. The Extracellular portion of the chain corresponds to 21-443; that stretch reads APPPCRCMTS…NTGPWGLLSQ (423 aa). N-linked (GlcNAc...) asparagine glycosylation occurs at Asn-169. Positions 186–189 match the CXXC motif; sequence CWIC. Intrachain disulfides connect Cys-186-Cys-189, Cys-186-Cys-405, and Cys-397-Cys-404. 5 N-linked (GlcNAc...) asparagine glycosylation sites follow: Asn-208, Asn-214, Asn-234, Asn-242, and Asn-281. The interval 320–340 is fusion peptide; that stretch reads ILPFVIGAGVLGALGTGIGGI. The interval 380 to 396 is immunosuppression; it reads LQNRRALDLLTAERGGT. Residues 397 to 405 carry the CX6CC motif; sequence CLFLGEECC. The N-linked (GlcNAc...) asparagine glycan is linked to Asn-409. Residues 444–464 traverse the membrane as a helical segment; that stretch reads WMPWILPFLGPLAAIILLLLF. Residues 465-484 are essential for the fusiogenic function; the sequence is GPCIFNLLVNFVSSRIEAVK. The Cytoplasmic portion of the chain corresponds to 465 to 538; the sequence is GPCIFNLLVN…LLRPNSAGSS (74 aa). Positions 496-538 are disordered; sequence KIYRRPLDRPASPRSDVNDIKGTPPEEILTAQPLLRPNSAGSS.

This sequence belongs to the gamma type-C retroviral envelope protein family. HERV class-I W env subfamily. The mature envelope protein (Env) consists of a trimer of SU-TM heterodimers attached probably by a labile interchain disulfide bond. Interacts with the C-type lectin CD209/DC-SIGN. In terms of processing, specific enzymatic cleavages in vivo yield mature proteins. Envelope glycoproteins are synthesized as an inactive precursor that is heavily N-glycosylated and processed likely by furin in the Golgi to yield the mature SU and TM proteins. The cleavage site between SU and TM requires the minimal sequence [KR]-X-[KR]-R. The CXXC motif is highly conserved across a broad range of retroviral envelope proteins. It is thought to participate in the formation of a labile disulfide bond possibly with the CX6CC motif present in the transmembrane protein.

The protein resides in the cell membrane. Its subcellular location is the virion. Its function is as follows. This endogenous retroviral envelope protein has retained its original fusogenic properties and participates in trophoblast fusion and the formation of a syncytium during placenta morphogenesis. May recognize and induce fusion through binding of SLC1A4 and SLC1A5. Functionally, endogenous envelope proteins may have kept, lost or modified their original function during evolution. Retroviral envelope proteins mediate receptor recognition and membrane fusion during early infection. The surface protein (SU) mediates receptor recognition, while the transmembrane protein (TM) acts as a class I viral fusion protein. The protein may have at least 3 conformational states: pre-fusion native state, pre-hairpin intermediate state, and post-fusion hairpin state. During viral and target cell membrane fusion, the coiled coil regions (heptad repeats) assume a trimer-of-hairpins structure, positioning the fusion peptide in close proximity to the C-terminal region of the ectodomain. The formation of this structure appears to drive apposition and subsequent fusion of membranes. This Pan troglodytes (Chimpanzee) protein is Syncytin-1 (ERVW-1).